The chain runs to 156 residues: Ribonuclease ageritin (156 aa).

The first 21 residues, 1–21 (MSESSTFTTAVVPEGEGVAPM), serve as a signal peptide directing secretion. The active site involves histidine 98. N-linked (GlcNAc...) asparagine glycans are attached at residues asparagine 100 and asparagine 139.

Belongs to the ribotoxin-like family. Monomer. The cofactor is Mg(2+).

The protein localises to the vacuole lumen. The enzyme catalyses a 28S rRNA containing guanosine-adenosine pair + H2O = an [RNA fragment]-3'-adenosine-3'-phosphate + a 5'-a hydroxy-guanosine-3'-[RNA fragment].. Its activity is regulated as follows. In contrast to most ribotoxins, activity is completely inhibited by EDTA. Fungal ribonuclease involved in fungal defense. Highly specific and highly toxic fungal endonuclease that cleaves a single phosphodiester bond in the 28S RNA of eukaryotic ribosomes at a universally conserved GAGA tetraloop of the sarcin-ricin loop (SRL). The damage of the SRL inhibits the binding of translation elongation factors and halts protein biosynthesis, ultimately resulting in the death of the target cells. Shows antitumor activity. Exerts cytotoxicity and induces apoptosis towards rat glial cells and human glioma cells, and also displays some activity towards human neurolastoma cell lines. Shows a strong entomotoxicity against Aedes aegypti larvae, yet no nematotoxicity against nematodes. This chain is Ribonuclease ageritin, found in Cyclocybe aegerita (Black poplar mushroom).